Consider the following 101-residue polypeptide: Putative monooxygenase Rv0793 (101 aa).

The 89-residue stretch at 5 to 93 folds into the ABM domain; sequence VAVIARFMPR…LTRPVAVTVL (89 aa).

In terms of assembly, homodimer.

Its function is as follows. Putative monooygenase that might be involved in antibiotic biosynthesis, or may act as reactive oxygen species scavenger that could help in evading host defenses. The polypeptide is Putative monooxygenase Rv0793 (Mycobacterium tuberculosis (strain ATCC 25618 / H37Rv)).